The following is a 212-amino-acid chain: Fe/S biogenesis protein NfuA (212 aa).

[4Fe-4S] cluster contacts are provided by C169 and C172.

Belongs to the NfuA family. Homodimer. Requires [4Fe-4S] cluster as cofactor.

Functionally, involved in iron-sulfur cluster biogenesis. Binds a 4Fe-4S cluster, can transfer this cluster to apoproteins, and thereby intervenes in the maturation of Fe/S proteins. Could also act as a scaffold/chaperone for damaged Fe/S proteins. In Acinetobacter baumannii (strain SDF), this protein is Fe/S biogenesis protein NfuA.